We begin with the raw amino-acid sequence, 206 residues long: Phosphoserine phosphatase (206 aa).

Aspartate 7 (nucleophile) is an active-site residue. Mg(2+) is bound by residues aspartate 7 and aspartate 9. The Proton donor role is filled by aspartate 9. Substrate is bound by residues glutamate 16, arginine 52, 95 to 96 (SG), and lysine 140. Aspartate 163 lines the Mg(2+) pocket. Asparagine 166 is a binding site for substrate.

It belongs to the HAD-like hydrolase superfamily. SerB family. Requires Mg(2+) as cofactor.

It carries out the reaction O-phospho-L-serine + H2O = L-serine + phosphate. The enzyme catalyses O-phospho-D-serine + H2O = D-serine + phosphate. Its pathway is amino-acid biosynthesis; L-serine biosynthesis; L-serine from 3-phospho-D-glycerate: step 3/3. This Wolinella succinogenes (strain ATCC 29543 / DSM 1740 / CCUG 13145 / JCM 31913 / LMG 7466 / NCTC 11488 / FDC 602W) (Vibrio succinogenes) protein is Phosphoserine phosphatase.